A 249-amino-acid chain; its full sequence is Probable transcriptional regulatory protein IL1088 (249 aa).

This sequence belongs to the TACO1 family.

The protein localises to the cytoplasm. This Idiomarina loihiensis (strain ATCC BAA-735 / DSM 15497 / L2-TR) protein is Probable transcriptional regulatory protein IL1088.